Here is a 411-residue protein sequence, read N- to C-terminus: Phosphoglycerate kinase (411 aa).

Residues 1–24 (MTGLCPLHQPSPLDHPHSGGTPMQ) form a disordered region. Substrate contacts are provided by residues 41–43 (DYN), arginine 56, 79–82 (HFGR), arginine 139, and arginine 172. Residues lysine 222, glycine 310, glutamate 341, and 369-372 (GGDS) each bind ATP.

It belongs to the phosphoglycerate kinase family. In terms of assembly, monomer.

The protein resides in the cytoplasm. It carries out the reaction (2R)-3-phosphoglycerate + ATP = (2R)-3-phospho-glyceroyl phosphate + ADP. It functions in the pathway carbohydrate degradation; glycolysis; pyruvate from D-glyceraldehyde 3-phosphate: step 2/5. This chain is Phosphoglycerate kinase, found in Deinococcus radiodurans (strain ATCC 13939 / DSM 20539 / JCM 16871 / CCUG 27074 / LMG 4051 / NBRC 15346 / NCIMB 9279 / VKM B-1422 / R1).